The sequence spans 347 residues: Dual specificity mitogen-activated protein kinase kinase 3 (347 aa).

The residue at position 1 (methionine 1) is an N-acetylmethionine. Residues 1–15 show a composition bias toward low complexity; that stretch reads MESPASSQPASMPQS. The disordered stretch occupies residues 1–46; the sequence is MESPASSQPASMPQSKGKSKRKKDLRISCMSKPPAPNPTPPRNLDS. A phosphoserine mark is found at serine 3 and serine 15. Positions 64-325 constitute a Protein kinase domain; it reads LVTISELGRG…YLELMEHPFF (262 aa). Residues 70–78 and lysine 93 each bind ATP; that span reads LGRGAYGVV. Residue aspartate 190 is the Proton acceptor of the active site. A Phosphoserine modification is found at serine 218. Phosphothreonine is present on threonine 222.

Belongs to the protein kinase superfamily. STE Ser/Thr protein kinase family. MAP kinase kinase subfamily. In terms of assembly, component of a signaling complex containing at least AKAP13, PKN1, MAPK14, ZAK and MAP2K3. Within this complex, AKAP13 interacts directly with PKN1, which in turn recruits MAPK14, MAP2K3 and ZAK. Binds to DYRK1B/MIRK and increases its kinase activity. Part of a complex with MAP3K3, RAC1 and CCM2. Interacts with ARRB1. (Microbial infection) Interacts with Yersinia YopJ. In terms of processing, autophosphorylated. Phosphorylation on Ser-218 and Thr-222 by MAP kinase kinase kinases positively regulates the kinase activity. Phosphorylated by TAOK2. Post-translationally, (Microbial infection) Yersinia YopJ may acetylate Ser/Thr residues, preventing phosphorylation and activation, thus blocking the MAPK signaling pathway. As to expression, abundant expression is seen in the skeletal muscle. It is also widely expressed in other tissues.

It carries out the reaction L-seryl-[protein] + ATP = O-phospho-L-seryl-[protein] + ADP + H(+). The catalysed reaction is L-threonyl-[protein] + ATP = O-phospho-L-threonyl-[protein] + ADP + H(+). It catalyses the reaction L-tyrosyl-[protein] + ATP = O-phospho-L-tyrosyl-[protein] + ADP + H(+). Its activity is regulated as follows. Activated by dual phosphorylation on Ser-218 and Thr-222. Its function is as follows. Dual specificity kinase. Is activated by cytokines and environmental stress in vivo. Catalyzes the concomitant phosphorylation of a threonine and a tyrosine residue in the MAP kinase p38. Part of a signaling cascade that begins with the activation of the adrenergic receptor ADRA1B and leads to the activation of MAPK14. The polypeptide is Dual specificity mitogen-activated protein kinase kinase 3 (MAP2K3) (Homo sapiens (Human)).